A 239-amino-acid chain; its full sequence is Ribosomal RNA small subunit methyltransferase G (239 aa).

S-adenosyl-L-methionine-binding positions include Gly77, Phe82, 128–129 (AE), and Arg147.

This sequence belongs to the methyltransferase superfamily. RNA methyltransferase RsmG family.

The protein resides in the cytoplasm. Specifically methylates the N7 position of guanine in position 535 of 16S rRNA. The protein is Ribosomal RNA small subunit methyltransferase G of Bacillus cereus (strain ZK / E33L).